We begin with the raw amino-acid sequence, 273 residues long: Ribosomal RNA small subunit methyltransferase A (273 aa).

Residues Asn18, Leu20, Gly45, Glu66, Asp91, and Asn113 each coordinate S-adenosyl-L-methionine.

It belongs to the class I-like SAM-binding methyltransferase superfamily. rRNA adenine N(6)-methyltransferase family. RsmA subfamily.

The protein resides in the cytoplasm. The catalysed reaction is adenosine(1518)/adenosine(1519) in 16S rRNA + 4 S-adenosyl-L-methionine = N(6)-dimethyladenosine(1518)/N(6)-dimethyladenosine(1519) in 16S rRNA + 4 S-adenosyl-L-homocysteine + 4 H(+). In terms of biological role, specifically dimethylates two adjacent adenosines (A1518 and A1519) in the loop of a conserved hairpin near the 3'-end of 16S rRNA in the 30S particle. May play a critical role in biogenesis of 30S subunits. The polypeptide is Ribosomal RNA small subunit methyltransferase A (Salmonella newport (strain SL254)).